We begin with the raw amino-acid sequence, 174 residues long: Achaete-scute homolog 3 (174 aa).

The basic motif stretch occupies residues 92 to 105 (AFIRKRNERERQRV). In terms of domain architecture, bHLH spans 92–144 (AFIRKRNERERQRVKCVNEGYARLRRHLPEDYLEKRLSKVETLRAAIKYISYL). Residues 106–144 (KCVNEGYARLRRHLPEDYLEKRLSKVETLRAAIKYISYL) are helix-loop-helix motif. The interval 153–174 (SETKKNPRTASCGSLDPALRVI) is disordered.

As to quaternary structure, efficient DNA binding requires dimerization with another bHLH protein. In terms of tissue distribution, expressed in the salivary duct cells. Also expressed at lower levels in testis and epididymis. Expressed in the olfactory epithelium (OE), in a subset of apical microvillar cells.

It localises to the nucleus. Its function is as follows. Transcriptional repressor. Inhibits myogenesis. Plays a role in progenitor cells which differentiate into ductal and acinar, but not myoepithelial, cell lineages in the salivary glands. Involved in the functions of the microvillar cells and Bowman's glands and probably, in a non-cell-autonomous manner, in the development or regeneration of a complete olfactory epithelium (OE). The chain is Achaete-scute homolog 3 (Ascl3) from Mus musculus (Mouse).